Reading from the N-terminus, the 378-residue chain is Cytochrome b (378 aa).

Helical transmembrane passes span phenylalanine 34–methionine 54, tryptophan 78–valine 99, tryptophan 114–leucine 134, and phenylalanine 179–leucine 199. Heme b-binding residues include histidine 84 and histidine 98. Histidine 183 and histidine 197 together coordinate heme b. Histidine 202 serves as a coordination point for a ubiquinone. 4 helical membrane-spanning segments follow: residues phenylalanine 227–serine 247, leucine 289–asparagine 309, isoleucine 321–alanine 341, and tyrosine 348–leucine 368.

It belongs to the cytochrome b family. The main subunits of complex b-c1 are: cytochrome b, cytochrome c1 and the Rieske protein. Heme b is required as a cofactor.

Its subcellular location is the mitochondrion inner membrane. In terms of biological role, component of the ubiquinol-cytochrome c reductase complex (complex III or cytochrome b-c1 complex) that is part of the mitochondrial respiratory chain. The b-c1 complex mediates electron transfer from ubiquinol to cytochrome c. Contributes to the generation of a proton gradient across the mitochondrial membrane that is then used for ATP synthesis. The sequence is that of Cytochrome b (mt:Cyt-b) from Drosophila sechellia (Fruit fly).